The sequence spans 136 residues: WAP four-disulfide core domain protein 6A (136 aa).

An N-terminal signal peptide occupies residues 1–27 (MRLWGLLPFLVPFILLWSIQEPELAEG). The WAP domain occupies 28-73 (FFIRTCPRVRVKCEVEERNECTRHRQCPNKKRCCLFSCGKKCMDLR). 7 disulfides stabilise this stretch: C33–C61, C40–C65, C48–C60, C54–C69, C77–C127, C86–C110, and C102–C123. A BPTI/Kunitz inhibitor domain is found at 77–127 (CSLPQDPGPCLAYLPRWWYNQETDLCTEFIYGGCQGNPNNFPSEGICTVVC).

The protein localises to the secreted. This chain is WAP four-disulfide core domain protein 6A (Wfdc6a), found in Mus musculus (Mouse).